We begin with the raw amino-acid sequence, 496 residues long: Glycerol kinase (496 aa).

Thr-12 contacts ADP. 3 residues coordinate ATP: Thr-12, Thr-13, and Ser-14. Thr-12 contacts sn-glycerol 3-phosphate. An ADP-binding site is contributed by Arg-16. Residues Arg-82, Glu-83, and Tyr-134 each coordinate sn-glycerol 3-phosphate. 3 residues coordinate glycerol: Arg-82, Glu-83, and Tyr-134. His-230 carries the phosphohistidine; by HPr modification. A sn-glycerol 3-phosphate-binding site is contributed by Asp-244. Glycerol contacts are provided by Asp-244 and Gln-245. ADP-binding residues include Thr-266 and Gly-309. ATP is bound by residues Thr-266, Gly-309, Gln-313, and Gly-410. ADP-binding residues include Gly-410 and Asn-414.

Belongs to the FGGY kinase family. In terms of assembly, homotetramer and homodimer (in equilibrium). In terms of processing, the phosphoenolpyruvate-dependent sugar phosphotransferase system (PTS), including enzyme I, and histidine-containing protein (HPr) are required for the phosphorylation, which leads to the activation of the enzyme.

The catalysed reaction is glycerol + ATP = sn-glycerol 3-phosphate + ADP + H(+). It participates in polyol metabolism; glycerol degradation via glycerol kinase pathway; sn-glycerol 3-phosphate from glycerol: step 1/1. With respect to regulation, activated by phosphorylation and inhibited by fructose 1,6-bisphosphate (FBP). Key enzyme in the regulation of glycerol uptake and metabolism. Catalyzes the phosphorylation of glycerol to yield sn-glycerol 3-phosphate. In Bacillus velezensis (strain DSM 23117 / BGSC 10A6 / LMG 26770 / FZB42) (Bacillus amyloliquefaciens subsp. plantarum), this protein is Glycerol kinase.